The following is a 309-amino-acid chain: D-galacturonate reductase (309 aa).

Tyr-50 functions as the Proton donor in the catalytic mechanism. Substrate is bound at residue His-109. 210–264 (SPLGSTGSPLMSADPVVKIAEKKGISPTTVLLSYHVNRGSTVLAKSVTPARIKAN) contributes to the NADP(+) binding site.

The protein belongs to the aldo/keto reductase family.

It carries out the reaction L-galactonate + NADP(+) = aldehydo-D-galacturonate + NADPH + H(+). Its pathway is carbohydrate acid metabolism. In terms of biological role, mediates the reduction of D-galacturonate to L-galactonate, the first step in D-galacturonate catabolic process. Also has activity with D-glucuronate and DL-glyceraldehyde. No activity is observed with D-glucose, D-fructose, D-xylose, D-galactose, L-arabinose or D-mannose. Activity is seen only with NADPH and not with NADH. The protein is D-galacturonate reductase (gar1) of Hypocrea jecorina (Trichoderma reesei).